A 521-amino-acid chain; its full sequence is Probable methylmalonate-semialdehyde/malonate-semialdehyde dehydrogenase [acylating], mitochondrial (521 aa).

The NAD(+) site is built by Ala170, Phe172, Lys196, Glu199, Arg200, and Ser249. Residue Cys304 is the Nucleophile of the active site. Glu404 contributes to the NAD(+) binding site.

Belongs to the aldehyde dehydrogenase family. In terms of assembly, homotetramer.

The protein resides in the mitochondrion. The catalysed reaction is 2-methyl-3-oxopropanoate + NAD(+) + CoA + H2O = propanoyl-CoA + hydrogencarbonate + NADH + H(+). The enzyme catalyses 3-oxopropanoate + NAD(+) + CoA + H2O = hydrogencarbonate + acetyl-CoA + NADH + H(+). Its function is as follows. Probable malonate and methylmalonate semialdehyde dehydrogenase involved in the catabolism of valine, thymine, and compounds catabolized by way of beta-alanine, including uracil and cytidine. This chain is Probable methylmalonate-semialdehyde/malonate-semialdehyde dehydrogenase [acylating], mitochondrial, found in Anopheles gambiae (African malaria mosquito).